A 98-amino-acid chain; its full sequence is HssA/B-like protein 50 (98 aa).

Disordered regions lie at residues 1–26 (MTLF…SFGS) and 68–98 (TRGS…CCGI). Residues 84–98 (GHGGMGGGNGSCCGI) show a composition bias toward gly residues.

The protein belongs to the hssA/B family.

The protein is HssA/B-like protein 50 (hssl50) of Dictyostelium discoideum (Social amoeba).